Reading from the N-terminus, the 308-residue chain is Alpha/beta hydrolase domain-containing protein WAV2 (308 aa).

A helical membrane pass occupies residues 6–26 (SALFYGFGGIVVAGVALLVAF). Catalysis depends on charge relay system residues S159, D243, and R308.

The protein belongs to the serine esterase family. Expressed in roots, rosette leaves, stems and flowers.

Its subcellular location is the cell membrane. Involved in the regulation of root growth. Involved in the suppression of the root bending in response to touch stimuli, gravity and light. Negatively regulates stimulus-induced root bending through inhibition of root tip rotation. This is Alpha/beta hydrolase domain-containing protein WAV2 from Arabidopsis thaliana (Mouse-ear cress).